The following is a 418-amino-acid chain: Serine hydroxymethyltransferase (418 aa).

Residues Leu121 and 125 to 127 (GHL) each bind (6S)-5,6,7,8-tetrahydrofolate. Residue Lys230 is modified to N6-(pyridoxal phosphate)lysine. (6S)-5,6,7,8-tetrahydrofolate is bound at residue 355 to 357 (SPF).

It belongs to the SHMT family. Homodimer. The cofactor is pyridoxal 5'-phosphate.

The protein localises to the cytoplasm. It carries out the reaction (6R)-5,10-methylene-5,6,7,8-tetrahydrofolate + glycine + H2O = (6S)-5,6,7,8-tetrahydrofolate + L-serine. Its pathway is one-carbon metabolism; tetrahydrofolate interconversion. It functions in the pathway amino-acid biosynthesis; glycine biosynthesis; glycine from L-serine: step 1/1. Catalyzes the reversible interconversion of serine and glycine with tetrahydrofolate (THF) serving as the one-carbon carrier. This reaction serves as the major source of one-carbon groups required for the biosynthesis of purines, thymidylate, methionine, and other important biomolecules. Also exhibits THF-independent aldolase activity toward beta-hydroxyamino acids, producing glycine and aldehydes, via a retro-aldol mechanism. The chain is Serine hydroxymethyltransferase from Streptococcus pyogenes serotype M6 (strain ATCC BAA-946 / MGAS10394).